Consider the following 118-residue polypeptide: Small ribosomal subunit protein uS13 (118 aa).

Positions Lys-93–Lys-118 are disordered.

Belongs to the universal ribosomal protein uS13 family. In terms of assembly, part of the 30S ribosomal subunit. Forms a loose heterodimer with protein S19. Forms two bridges to the 50S subunit in the 70S ribosome.

Functionally, located at the top of the head of the 30S subunit, it contacts several helices of the 16S rRNA. In the 70S ribosome it contacts the 23S rRNA (bridge B1a) and protein L5 of the 50S subunit (bridge B1b), connecting the 2 subunits; these bridges are implicated in subunit movement. Contacts the tRNAs in the A and P-sites. The chain is Small ribosomal subunit protein uS13 from Buchnera aphidicola subsp. Baizongia pistaciae (strain Bp).